The sequence spans 31 residues: LysM-domain containing protein (31 aa).

The stretch at 1–28 is one LysM 1 repeat; sequence YSPSLTDLQSYNAMNGPALKAGDILAVP.

This Jatropha curcas (Barbados nut) protein is LysM-domain containing protein.